The primary structure comprises 183 residues: uncharacterized protein (183 aa).

The N-terminal stretch at 1 to 23 is a signal peptide; the sequence is MSAFKKSLLVAGVAMILSNNVFA. Cys41 and Cys80 are oxidised to a cystine.

It belongs to the fimbrial protein family.

The protein localises to the fimbrium. This is an uncharacterized protein from Escherichia coli (strain K12).